We begin with the raw amino-acid sequence, 257 residues long: MVLIRVLANLLILQLSYAQKSSELVIGGDECNINEHPFLVLVYYDDYQCGGTLINEEWVLTAAHCNGENMEIYLGMHSKKVPNKDRRRRVPKEKFFCDSSKNYTKWNKDIMLIRLNRPVRKSAHIAPLSLPSSPPSVGSVCRIMGWGTISPTKVTLPDVPRCANINLLDYEVCRAVYPELPATSRTLCAGILEGGKDSCGGDSGGPLICNGQFQGIVSWGGDPCAQPHEPGLYTNVFDHLDWIKGIIAGNTDVTCPL.

The N-terminal stretch at 1-18 (MVLIRVLANLLILQLSYA) is a signal peptide. A propeptide spanning residues 19-24 (QKSSEL) is cleaved from the precursor. The 224-residue stretch at 25–248 (VIGGDECNIN…HLDWIKGIIA (224 aa)) folds into the Peptidase S1 domain. 6 disulfides stabilise this stretch: Cys-31-Cys-162, Cys-49-Cys-65, Cys-97-Cys-255, Cys-141-Cys-209, Cys-173-Cys-188, and Cys-199-Cys-224. The Charge relay system role is filled by His-64. N-linked (GlcNAc...) asparagine glycosylation is present at Asn-102. Residue Asp-109 is the Charge relay system of the active site. Residue Ser-203 is the Charge relay system of the active site.

Belongs to the peptidase S1 family. Snake venom subfamily. As to quaternary structure, monomer. Expressed by the venom gland.

The protein resides in the secreted. In terms of biological role, snake venom serine protease that may act in the hemostasis system of the prey. The polypeptide is Snake venom serine protease serpentokallikrein-2 (Protobothrops mucrosquamatus (Taiwan habu)).